We begin with the raw amino-acid sequence, 820 residues long: Leucine--tRNA ligase (820 aa).

The 'HIGH' region signature appears at 42 to 52 (PYPSGDLHMGH). Residues 576–580 (KMSKS) carry the 'KMSKS' region motif. Lys-579 contributes to the ATP binding site.

It belongs to the class-I aminoacyl-tRNA synthetase family.

Its subcellular location is the cytoplasm. The catalysed reaction is tRNA(Leu) + L-leucine + ATP = L-leucyl-tRNA(Leu) + AMP + diphosphate. The polypeptide is Leucine--tRNA ligase (Coxiella burnetii (strain CbuG_Q212) (Coxiella burnetii (strain Q212))).